The sequence spans 190 residues: Prostaglandin-H2 D-isomerase (190 aa).

Residues 1-22 (MATHHTLWMGLVLLGLLGGLQA) form the signal peptide. N-linked (GlcNAc...) asparagine glycosylation is present at asparagine 51. Cysteine 65 serves as the catalytic Nucleophile. N-linked (GlcNAc...) asparagine glycosylation is present at asparagine 78. Cysteines 89 and 186 form a disulfide.

The protein belongs to the calycin superfamily. Lipocalin family. As to quaternary structure, monomer.

Its subcellular location is the rough endoplasmic reticulum. It is found in the nucleus membrane. It localises to the golgi apparatus. The protein resides in the cytoplasm. The protein localises to the perinuclear region. Its subcellular location is the secreted. The catalysed reaction is prostaglandin H2 = prostaglandin D2. Functionally, catalyzes the conversion of PGH2 to PGD2, a prostaglandin involved in smooth muscle contraction/relaxation and a potent inhibitor of platelet aggregation. Involved in a variety of CNS functions, such as sedation, NREM sleep and PGE2-induced allodynia, and may have an anti-apoptotic role in oligodendrocytes. Binds small non-substrate lipophilic molecules, including biliverdin, bilirubin, retinal, retinoic acid and thyroid hormone, and may act as a scavenger for harmful hydrophobic molecules and as a secretory retinoid and thyroid hormone transporter. Possibly involved in development and maintenance of the blood-brain, blood-retina, blood-aqueous humor and blood-testis barrier. It is likely to play important roles in both maturation and maintenance of the central nervous system and male reproductive system. Involved in PLA2G3-dependent maturation of mast cells. PLA2G3 is secreted by immature mast cells and acts on nearby fibroblasts upstream to PTDGS to synthesize PGD2, which in turn promotes mast cell maturation and degranulation via PTGDR. This chain is Prostaglandin-H2 D-isomerase (PTGDS), found in Macaca fuscata fuscata (Japanese macaque).